The sequence spans 188 residues: PRA1 family protein 3 (188 aa).

N-acetylmethionine is present on M1. Residues 1–35 (MDVNIAPLRAWDDFFPGSDRFARPDFRDISKWNNR) are Cytoplasmic-facing. The next 2 helical transmembrane spans lie at 36 to 56 (VVSN…MMIS) and 57 to 77 (VVGF…VLVF). Residues 78-93 (TGFVWAAHNKDILRRL) are Cytoplasmic-facing. Transmembrane regions (helical) follow at residues 94 to 114 (KKQY…FLIS) and 115 to 135 (MFGG…LMFI). Positions 103–117 (MVVMLASYFLISMFG) are required for homodimer formation and heterodimer formation with ARL6IP1. At 136 to 188 (HASLRLRNLKNKLENKIEGIGLKRTPMGIVLDALEQQEENISKFADYISKVNE) the chain is on the cytoplasmic side. The interval 136–188 (HASLRLRNLKNKLENKIEGIGLKRTPMGIVLDALEQQEENISKFADYISKVNE) is targeting to endoplasmic reticulum membrane.

The protein belongs to the PRA1 family. In terms of assembly, homodimer. Heterodimer with ARL6IP1. Forms multimers. Interacts with ARL6. Interacts with prenylated RAB1A and RAB3A. Interacts with SLC1A1/EAAC1. Interacts with RTN2 (via first transmembrane domain). Does not interact with VAMP1, VAMP2 or VAMP3.

It localises to the endoplasmic reticulum membrane. The protein resides in the cell membrane. The protein localises to the cytoplasm. It is found in the cytoskeleton. Its function is as follows. Regulates intracellular concentrations of taurine and glutamate. Negatively modulates SLC1A1/EAAC1 glutamate transport activity by decreasing its affinity for glutamate in a PKC activity-dependent manner. Plays a role in the retention of SLC1A1/EAAC1 in the endoplasmic reticulum. The chain is PRA1 family protein 3 (ARL6IP5) from Sus scrofa (Pig).